A 1379-amino-acid polypeptide reads, in one-letter code: DNA-directed RNA polymerase subunit beta (1379 aa).

This sequence belongs to the RNA polymerase beta chain family. As to quaternary structure, the RNAP catalytic core consists of 2 alpha, 1 beta, 1 beta' and 1 omega subunit. When a sigma factor is associated with the core the holoenzyme is formed, which can initiate transcription.

It catalyses the reaction RNA(n) + a ribonucleoside 5'-triphosphate = RNA(n+1) + diphosphate. DNA-dependent RNA polymerase catalyzes the transcription of DNA into RNA using the four ribonucleoside triphosphates as substrates. In Ruegeria sp. (strain TM1040) (Silicibacter sp.), this protein is DNA-directed RNA polymerase subunit beta.